Consider the following 159-residue polypeptide: Histone H1 (159 aa).

Disordered stretches follow at residues M1–L31, K80–K99, and A132–S159. Residues V10–R22 show a composition bias toward basic residues. Positions T12–A102 constitute an H15 domain. The span at C84–G93 shows a compositional bias: gly residues. A compositionally biased stretch (basic residues) spans K134–K148. Residues K149–S159 are compositionally biased toward basic and acidic residues.

Belongs to the histone H1/H5 family.

Its subcellular location is the nucleus. The protein resides in the chromosome. In terms of biological role, histones H1 are necessary for the condensation of nucleosome chains into higher-order structures. The polypeptide is Histone H1 (Psammechinus miliaris (Green sea urchin)).